The sequence spans 91 residues: Large ribosomal subunit protein bL27 (91 aa).

Residues 1-25 (MAHKKGAASSNNGRDSESKRLGVKR) form a disordered region.

This sequence belongs to the bacterial ribosomal protein bL27 family.

The polypeptide is Large ribosomal subunit protein bL27 (Corynebacterium kroppenstedtii (strain DSM 44385 / JCM 11950 / CIP 105744 / CCUG 35717)).